Reading from the N-terminus, the 306-residue chain is Large ribosomal subunit protein uL2m (306 aa).

The transit peptide at Met-1–Ser-60 directs the protein to the mitochondrion.

It belongs to the universal ribosomal protein uL2 family. As to quaternary structure, component of the mitochondrial ribosome large subunit (39S) which comprises a 16S rRNA and about 50 distinct proteins.

It localises to the mitochondrion. This is Large ribosomal subunit protein uL2m (Mrpl2) from Mus musculus (Mouse).